We begin with the raw amino-acid sequence, 500 residues long: NAD(P)H-quinone oxidoreductase chain 4, chloroplastic (500 aa).

Transmembrane regions (helical) follow at residues 4 to 24 (FPWL…LFFF), 37 to 57 (ICIC…HFEL), 87 to 107 (IGPI…AWPV), 113 to 130 (LFYF…GSFS), 134 to 154 (LLLF…LLSM), 167 to 187 (FILY…GIGL), 207 to 227 (IALE…KSPI), 242 to 262 (HYST…YGLV), 272 to 292 (AHSI…IYAA), 305 to 325 (IAYS…SISD), 330 to 350 (GAIL…FLAG), 364 to 384 (MGGL…LSMA), 386 to 406 (LALP…GIIT), 417 to 437 (VITL…LSML), and 463 to 483 (FVAI…DFVF).

This sequence belongs to the complex I subunit 4 family.

The protein resides in the plastid. It is found in the chloroplast thylakoid membrane. The enzyme catalyses a plastoquinone + NADH + (n+1) H(+)(in) = a plastoquinol + NAD(+) + n H(+)(out). It catalyses the reaction a plastoquinone + NADPH + (n+1) H(+)(in) = a plastoquinol + NADP(+) + n H(+)(out). The sequence is that of NAD(P)H-quinone oxidoreductase chain 4, chloroplastic from Cucumis sativus (Cucumber).